Reading from the N-terminus, the 202-residue chain is Protein DEHYDRATION-INDUCED 19 homolog 5 (202 aa).

The segment covering 88 to 97 (SHLLKRRKPS) has biased composition (basic residues). The interval 88–120 (SHLLKRRKPSRPSSSWPTPSNNSDPYFEGPPQY) is disordered. Over residues 98–112 (RPSSSWPTPSNNSDP) the composition is skewed to low complexity.

Belongs to the Di19 family.

The chain is Protein DEHYDRATION-INDUCED 19 homolog 5 (DI19-5) from Oryza sativa subsp. japonica (Rice).